Reading from the N-terminus, the 467-residue chain is 6-phosphogluconate dehydrogenase, decarboxylating (467 aa).

NADP(+)-binding positions include 9–14 (GLGVMG), 32–34 (NYT), 73–75 (VTA), and asparagine 101. Substrate contacts are provided by residues asparagine 101 and 127-129 (SGG). The active-site Proton acceptor is the lysine 181. 184-185 (HN) provides a ligand contact to substrate. Glutamate 188 acts as the Proton donor in catalysis. Substrate-binding residues include tyrosine 189, lysine 259, arginine 286, and histidine 451.

This sequence belongs to the 6-phosphogluconate dehydrogenase family. Homodimer.

The catalysed reaction is 6-phospho-D-gluconate + NADP(+) = D-ribulose 5-phosphate + CO2 + NADPH. It functions in the pathway carbohydrate degradation; pentose phosphate pathway; D-ribulose 5-phosphate from D-glucose 6-phosphate (oxidative stage): step 3/3. In terms of biological role, catalyzes the oxidative decarboxylation of 6-phosphogluconate to ribulose 5-phosphate and CO(2), with concomitant reduction of NADP to NADPH. In Bacillus licheniformis, this protein is 6-phosphogluconate dehydrogenase, decarboxylating (gntZ).